Here is a 144-residue protein sequence, read N- to C-terminus: D-aminoacyl-tRNA deacylase (144 aa).

The Gly-cisPro motif, important for rejection of L-amino acids motif lies at 136–137; it reads GP.

The protein belongs to the DTD family. As to quaternary structure, homodimer.

The protein resides in the cytoplasm. The enzyme catalyses glycyl-tRNA(Ala) + H2O = tRNA(Ala) + glycine + H(+). It carries out the reaction a D-aminoacyl-tRNA + H2O = a tRNA + a D-alpha-amino acid + H(+). In terms of biological role, an aminoacyl-tRNA editing enzyme that deacylates mischarged D-aminoacyl-tRNAs. Also deacylates mischarged glycyl-tRNA(Ala), protecting cells against glycine mischarging by AlaRS. Acts via tRNA-based rather than protein-based catalysis; rejects L-amino acids rather than detecting D-amino acids in the active site. By recycling D-aminoacyl-tRNA to D-amino acids and free tRNA molecules, this enzyme counteracts the toxicity associated with the formation of D-aminoacyl-tRNA entities in vivo and helps enforce protein L-homochirality. The sequence is that of D-aminoacyl-tRNA deacylase from Actinobacillus succinogenes (strain ATCC 55618 / DSM 22257 / CCUG 43843 / 130Z).